Consider the following 438-residue polypeptide: Glutamyl-tRNA(Gln) amidotransferase subunit D (438 aa).

The 331-residue stretch at 92–422 folds into the Asparaginase/glutaminase domain; that stretch reads PDVTIIGTGG…EEVRRMMLTN (331 aa). Active-site residues include Thr-102, Thr-178, Asp-179, and Lys-256.

Belongs to the asparaginase 1 family. GatD subfamily. In terms of assembly, heterodimer of GatD and GatE.

It catalyses the reaction L-glutamyl-tRNA(Gln) + L-glutamine + ATP + H2O = L-glutaminyl-tRNA(Gln) + L-glutamate + ADP + phosphate + H(+). Allows the formation of correctly charged Gln-tRNA(Gln) through the transamidation of misacylated Glu-tRNA(Gln) in organisms which lack glutaminyl-tRNA synthetase. The reaction takes place in the presence of glutamine and ATP through an activated gamma-phospho-Glu-tRNA(Gln). The GatDE system is specific for glutamate and does not act on aspartate. The chain is Glutamyl-tRNA(Gln) amidotransferase subunit D from Pyrococcus horikoshii (strain ATCC 700860 / DSM 12428 / JCM 9974 / NBRC 100139 / OT-3).